A 509-amino-acid chain; its full sequence is Lanosterol 14-alpha demethylase (509 aa).

The helical transmembrane segment at 30-50 (GNLLSMLLIACAFTLSLVYLF) threads the bilayer. Cys455 contributes to the heme binding site.

It belongs to the cytochrome P450 family. The cofactor is heme. In terms of processing, ubiquitinated by MARCHF6, leading to proteasomal degradation.

The protein resides in the endoplasmic reticulum membrane. It localises to the microsome membrane. It carries out the reaction a 14alpha-methyl steroid + 3 reduced [NADPH--hemoprotein reductase] + 3 O2 = a Delta(14) steroid + formate + 3 oxidized [NADPH--hemoprotein reductase] + 4 H2O + 4 H(+). The catalysed reaction is lanosterol + 3 reduced [NADPH--hemoprotein reductase] + 3 O2 = 4,4-dimethyl-5alpha-cholesta-8,14,24-trien-3beta-ol + formate + 3 oxidized [NADPH--hemoprotein reductase] + 4 H2O + 4 H(+). It catalyses the reaction 24,25-dihydrolanosterol + 3 reduced [NADPH--hemoprotein reductase] + 3 O2 = 4,4-dimethyl-8,14-cholestadien-3beta-ol + formate + 3 oxidized [NADPH--hemoprotein reductase] + 4 H2O + 4 H(+). The enzyme catalyses a 14alpha-methyl steroid + reduced [NADPH--hemoprotein reductase] + O2 = a 14alpha-hydroxymethyl steroid + oxidized [NADPH--hemoprotein reductase] + H2O + H(+). It carries out the reaction a 14alpha-hydroxymethyl steroid + reduced [NADPH--hemoprotein reductase] + O2 = a 14alpha-formyl steroid + oxidized [NADPH--hemoprotein reductase] + 2 H2O + H(+). The catalysed reaction is a 14alpha-formyl steroid + reduced [NADPH--hemoprotein reductase] + O2 = a Delta(14) steroid + formate + oxidized [NADPH--hemoprotein reductase] + H2O + 2 H(+). It catalyses the reaction lanosterol + reduced [NADPH--hemoprotein reductase] + O2 = 32-hydroxylanosterol + oxidized [NADPH--hemoprotein reductase] + H2O + H(+). The enzyme catalyses 32-hydroxylanosterol + reduced [NADPH--hemoprotein reductase] + O2 = 32-oxolanosterol + oxidized [NADPH--hemoprotein reductase] + 2 H2O + H(+). It carries out the reaction 32-oxolanosterol + reduced [NADPH--hemoprotein reductase] + O2 = 4,4-dimethyl-5alpha-cholesta-8,14,24-trien-3beta-ol + formate + oxidized [NADPH--hemoprotein reductase] + H2O + 2 H(+). The catalysed reaction is 24,25-dihydrolanosterol + reduced [NADPH--hemoprotein reductase] + O2 = 32-hydroxy-24,25-dihydrolanosterol + oxidized [NADPH--hemoprotein reductase] + H2O + H(+). It catalyses the reaction 32-hydroxy-24,25-dihydrolanosterol + reduced [NADPH--hemoprotein reductase] + O2 = 32-oxo-24,25-dihydrolanosterol + oxidized [NADPH--hemoprotein reductase] + 2 H2O + H(+). The enzyme catalyses 32-oxo-24,25-dihydrolanosterol + reduced [NADPH--hemoprotein reductase] + O2 = 4,4-dimethyl-8,14-cholestadien-3beta-ol + formate + oxidized [NADPH--hemoprotein reductase] + H2O + 2 H(+). It functions in the pathway steroid biosynthesis; zymosterol biosynthesis; zymosterol from lanosterol: step 1/6. Its activity is regulated as follows. Inhibited by azalanstat. Inhibited by azole antifungal agents ketoconazole, itraconazole and fluconazole. Sterol 14alpha-demethylase that plays a critical role in the cholesterol biosynthesis pathway, being cholesterol the major sterol component in mammalian membranes as well as a precursor for bile acid and steroid hormone synthesis. Cytochrome P450 monooxygenase that catalyzes the three-step oxidative removal of the 14alpha-methyl group (C-32) of sterols such as lanosterol (lanosta-8,24-dien-3beta-ol) and 24,25-dihydrolanosterol (DHL) in the form of formate, and converts the sterols to 4,4-dimethyl-5alpha-cholesta-8,14,24-trien-3beta-ol and 4,4-dimethyl-8,14-cholestadien-3beta-ol, respectively, which are intermediates of cholesterol biosynthesis. Can also demethylate substrates not intrinsic to mammals, such as eburicol (24-methylene-24,25-dihydrolanosterol), but at a lower rate than DHL. The sequence is that of Lanosterol 14-alpha demethylase from Pongo abelii (Sumatran orangutan).